Here is a 367-residue protein sequence, read N- to C-terminus: Heme A synthase (367 aa).

Transmembrane regions (helical) follow at residues 25–45, 111–131, 137–157, 174–194, and 211–231; these read AIRIWLGCVLLALFALVLVGG, FLARAMGVIFGVPLLFFVLTG, LWLPLGGIFLLGGLQGAIGWW, LATHLVTACLIFASCMWFMRA, and LAGLIAFMSLFQIYLGALVAG. His274 serves as a coordination point for heme. A run of 3 helical transmembrane segments spans residues 276–296, 305–325, and 327–347; these read LGAYALFAVVAVNMIISLRAA, SVVLFVLVLIQAILGITTLLL, and VPLHLALTHQAGALIVFGFAI. His335 serves as a coordination point for heme.

It belongs to the COX15/CtaA family. Type 2 subfamily. In terms of assembly, interacts with CtaB. The cofactor is heme b.

Its subcellular location is the cell membrane. It catalyses the reaction Fe(II)-heme o + 2 A + H2O = Fe(II)-heme a + 2 AH2. The protein operates within porphyrin-containing compound metabolism; heme A biosynthesis; heme A from heme O: step 1/1. In terms of biological role, catalyzes the conversion of heme O to heme A by two successive hydroxylations of the methyl group at C8. The first hydroxylation forms heme I, the second hydroxylation results in an unstable dihydroxymethyl group, which spontaneously dehydrates, resulting in the formyl group of heme A. The polypeptide is Heme A synthase (Rhizobium rhizogenes (strain K84 / ATCC BAA-868) (Agrobacterium radiobacter)).